A 237-amino-acid chain; its full sequence is Ribosomal RNA small subunit methyltransferase G (237 aa).

Residues glycine 78, phenylalanine 83, 129–130 (AE), and arginine 148 contribute to the S-adenosyl-L-methionine site. The segment at 218-237 (KKETPRKYPRKAGTPNKKPL) is disordered.

It belongs to the methyltransferase superfamily. RNA methyltransferase RsmG family.

Its subcellular location is the cytoplasm. Its function is as follows. Specifically methylates the N7 position of a guanine in 16S rRNA. The sequence is that of Ribosomal RNA small subunit methyltransferase G from Streptococcus uberis (strain ATCC BAA-854 / 0140J).